Here is a 453-residue protein sequence, read N- to C-terminus: Potassium/proton antiporter CemA (453 aa).

Transmembrane regions (helical) follow at residues 235–255 (YMAC…IIFL), 328–348 (ICTI…ACLL), 378–398 (ILLL…EIII), and 414–434 (VSCF…YWIF).

The protein belongs to the CemA family.

It localises to the plastid. It is found in the chloroplast inner membrane. The enzyme catalyses K(+)(in) + H(+)(out) = K(+)(out) + H(+)(in). In terms of biological role, contributes to K(+)/H(+) antiport activity by supporting proton efflux to control proton extrusion and homeostasis in chloroplasts in a light-dependent manner to modulate photosynthesis. Prevents excessive induction of non-photochemical quenching (NPQ) under continuous-light conditions. Indirectly promotes efficient inorganic carbon uptake into chloroplasts. The protein is Potassium/proton antiporter CemA of Zygnema circumcarinatum (Green alga).